The sequence spans 286 residues: Serine carboxypeptidase-like (286 aa).

Ser-4 is a catalytic residue. Cystine bridges form between Cys-83/Cys-98 and Cys-121/Cys-126. The active site involves Asp-193. Residue Cys-196 participates in substrate binding. N-linked (GlcNAc...) asparagine glycosylation is present at Asn-227. The active site involves His-250.

This sequence belongs to the peptidase S10 family.

Its function is as follows. Involved in degradation of small peptides. The polypeptide is Serine carboxypeptidase-like (Pisum sativum (Garden pea)).